The chain runs to 238 residues: LexA repressor (238 aa).

The H-T-H motif DNA-binding region spans 26–46 (FDEMKDALDLASKSGIHRLIT). Residues S158 and K196 each act as for autocatalytic cleavage activity in the active site.

This sequence belongs to the peptidase S24 family. As to quaternary structure, homodimer.

It carries out the reaction Hydrolysis of Ala-|-Gly bond in repressor LexA.. Represses a number of genes involved in the response to DNA damage (SOS response), including recA and lexA. In the presence of single-stranded DNA, RecA interacts with LexA causing an autocatalytic cleavage which disrupts the DNA-binding part of LexA, leading to derepression of the SOS regulon and eventually DNA repair. This Rhizobium meliloti (strain 1021) (Ensifer meliloti) protein is LexA repressor.